The chain runs to 1023 residues: uncharacterized protein (1023 aa).

The disordered stretch occupies residues 1–35; the sequence is MAEKRPLGPLGPMMYGKLPRLEPDPGPGHSLPLSA. Residue Lys17 is modified to N6-acetyllysine. Ser206 and Ser383 each carry phosphoserine. 5 disordered regions span residues 381–501, 518–551, 703–742, 907–980, and 1002–1023; these read GASP…PVID, PEPR…ASRS, PAPA…PEQH, EART…TLRA, and KASG…THHL. Position 389 is a phosphothreonine (Thr389). Residues 391-400 are compositionally biased toward polar residues; sequence PSHSQNSVQP. 3 stretches are compositionally biased toward basic and acidic residues: residues 425–436, 443–454, and 477–490; these read RPAEKPTPEAQE, CRKEQLQPRPNE, and CAKE…KDAR. Ser493 and Ser494 each carry phosphoserine. Pro residues predominate over residues 706–722; that stretch reads ASAPPPSPAPAPAPASG. 3 positions are modified to phosphoserine: Ser912, Ser964, and Ser972. The span at 963 to 972 shows a compositional bias: low complexity; the sequence is PSPSSGASTS.

This is an uncharacterized protein from Mus musculus (Mouse).